We begin with the raw amino-acid sequence, 49 residues long: Glutathione peroxidase (49 aa).

The protein belongs to the glutathione peroxidase family.

The catalysed reaction is 2 glutathione + H2O2 = glutathione disulfide + 2 H2O. Its activity is regulated as follows. Inhibited by Cu(2+), SDS and DTT. Activity is slightly increased by Fe(2+), Mn(2+), triton X-100 and EDTA. In terms of biological role, glutathione peroxidase which may protect the cell from oxidative damage. In Lactiplantibacillus plantarum (Lactobacillus plantarum), this protein is Glutathione peroxidase.